The primary structure comprises 234 residues: ATP synthase subunit a 2 (234 aa).

6 helical membrane passes run 29–49 (FFQHVTHTWLVMAILIGVGLL), 90–110 (LIATLALFLLVSNLIGLIPGF), 116–136 (SLNTNAALAVGVFLVTHIVGV), 147–167 (FMGPVWWLTPLILPIELIGHL), 186–206 (IVLMIFFSLVPLLLPIPMMLM), and 207–227 (GILVAFIQTFVFMLLSMIYIA).

This sequence belongs to the ATPase A chain family. In terms of assembly, F-type ATPases have 2 components, CF(1) - the catalytic core - and CF(0) - the membrane proton channel. CF(1) has five subunits: alpha(3), beta(3), gamma(1), delta(1), epsilon(1). CF(0) has three main subunits: a(1), b(2) and c(9-12). The alpha and beta chains form an alternating ring which encloses part of the gamma chain. CF(1) is attached to CF(0) by a central stalk formed by the gamma and epsilon chains, while a peripheral stalk is formed by the delta and b chains.

Its subcellular location is the cell inner membrane. Key component of the proton channel; it plays a direct role in the translocation of protons across the membrane. This chain is ATP synthase subunit a 2, found in Syntrophotalea carbinolica (strain DSM 2380 / NBRC 103641 / GraBd1) (Pelobacter carbinolicus).